Consider the following 430-residue polypeptide: Glutamate-1-semialdehyde 2,1-aminomutase (430 aa).

Lys-268 bears the N6-(pyridoxal phosphate)lysine mark.

The protein belongs to the class-III pyridoxal-phosphate-dependent aminotransferase family. HemL subfamily. Requires pyridoxal 5'-phosphate as cofactor.

It is found in the cytoplasm. The catalysed reaction is (S)-4-amino-5-oxopentanoate = 5-aminolevulinate. It participates in porphyrin-containing compound metabolism; protoporphyrin-IX biosynthesis; 5-aminolevulinate from L-glutamyl-tRNA(Glu): step 2/2. This chain is Glutamate-1-semialdehyde 2,1-aminomutase, found in Methanopyrus kandleri (strain AV19 / DSM 6324 / JCM 9639 / NBRC 100938).